The chain runs to 734 residues: Photosystem I P700 chlorophyll a apoprotein A2 (734 aa).

8 helical membrane passes run 46-69 (IFAS…FHVA), 135-158 (LYTG…LHLQ), 175-199 (LNHH…HVAI), 273-291 (IAHH…GHMY), 330-353 (LHFQ…QHMY), 369-395 (AALY…IFLI), 417-439 (AIIS…LYVH), and 517-535 (FLVH…LILV). [4Fe-4S] cluster-binding residues include C559 and C568. 2 helical membrane passes run 575-596 (AFYS…YWHW) and 643-665 (LSVW…MFLI). Chlorophyll a-binding residues include H654, M662, and Y670. Residue W671 participates in phylloquinone binding. The helical transmembrane segment at 707–727 (LVGLAHFSVGYIFTYAAFLIA) threads the bilayer.

Belongs to the PsaA/PsaB family. As to quaternary structure, the PsaA/B heterodimer binds the P700 chlorophyll special pair and subsequent electron acceptors. PSI consists of a core antenna complex that captures photons, and an electron transfer chain that converts photonic excitation into a charge separation. The eukaryotic PSI reaction center is composed of at least 11 subunits. It depends on P700 is a chlorophyll a/chlorophyll a' dimer, A0 is one or more chlorophyll a, A1 is one or both phylloquinones and FX is a shared 4Fe-4S iron-sulfur center. as a cofactor.

The protein resides in the plastid. Its subcellular location is the chloroplast thylakoid membrane. The catalysed reaction is reduced [plastocyanin] + hnu + oxidized [2Fe-2S]-[ferredoxin] = oxidized [plastocyanin] + reduced [2Fe-2S]-[ferredoxin]. Functionally, psaA and PsaB bind P700, the primary electron donor of photosystem I (PSI), as well as the electron acceptors A0, A1 and FX. PSI is a plastocyanin-ferredoxin oxidoreductase, converting photonic excitation into a charge separation, which transfers an electron from the donor P700 chlorophyll pair to the spectroscopically characterized acceptors A0, A1, FX, FA and FB in turn. Oxidized P700 is reduced on the lumenal side of the thylakoid membrane by plastocyanin. The protein is Photosystem I P700 chlorophyll a apoprotein A2 of Huperzia lucidula (Shining clubmoss).